The chain runs to 400 residues: Cartilage-associated protein (400 aa).

Positions 1–25 (MGPRSPTAALLVLLCVGCAPTPGRG) are cleaved as a signal peptide. Residues Asn86 and Asn362 are each glycosylated (N-linked (GlcNAc...) asparagine).

The protein belongs to the leprecan family. As to expression, found in articular chondrocytes. Expressed in a variety of tissues.

Its subcellular location is the secreted. It localises to the extracellular space. It is found in the extracellular matrix. In terms of biological role, necessary for efficient 3-hydroxylation of fibrillar collagen prolyl residues. In Mus musculus (Mouse), this protein is Cartilage-associated protein (Crtap).